A 341-amino-acid chain; its full sequence is Phosphoribosylformylglycinamidine cyclo-ligase (341 aa).

Belongs to the AIR synthase family.

The protein localises to the cytoplasm. It catalyses the reaction 2-formamido-N(1)-(5-O-phospho-beta-D-ribosyl)acetamidine + ATP = 5-amino-1-(5-phospho-beta-D-ribosyl)imidazole + ADP + phosphate + H(+). Its pathway is purine metabolism; IMP biosynthesis via de novo pathway; 5-amino-1-(5-phospho-D-ribosyl)imidazole from N(2)-formyl-N(1)-(5-phospho-D-ribosyl)glycinamide: step 2/2. This Caldicellulosiruptor saccharolyticus (strain ATCC 43494 / DSM 8903 / Tp8T 6331) protein is Phosphoribosylformylglycinamidine cyclo-ligase.